Reading from the N-terminus, the 263-residue chain is Lysine 5,6-aminomutase beta subunit (263 aa).

The 140-residue stretch at Glu-120–Arg-259 folds into the B12-binding domain. Residues Thr-130–Gly-136 and His-133 each bind adenosylcob(III)alamin. Residue Lys-144 is modified to N6-(pyridoxal phosphate)lysine. Adenosylcob(III)alamin is bound by residues Leu-185–Gln-192, Ile-219–Ala-223, and Phe-239–Tyr-244.

This sequence belongs to the KamE family. As to quaternary structure, heterotetramer of 2 alpha and 2 beta subunits. The cofactor is adenosylcob(III)alamin. It depends on pyridoxal 5'-phosphate as a cofactor.

It catalyses the reaction (3S)-3,6-diaminohexanoate = (3S,5S)-3,5-diaminohexanoate. The catalysed reaction is D-lysine = (2R,5S)-2,5-diaminohexanoate. It functions in the pathway amino-acid degradation; L-lysine degradation via acetate pathway. Catalyzes the migration of the L-beta-lysine and D-lysine epsilon amino group to the delta carbon to produce 3,5-diaminohexanoate and 2,5-diaminohexanoate, respectively. The chain is Lysine 5,6-aminomutase beta subunit from Fusobacterium nucleatum subsp. nucleatum (strain ATCC 25586 / DSM 15643 / BCRC 10681 / CIP 101130 / JCM 8532 / KCTC 2640 / LMG 13131 / VPI 4355).